Consider the following 449-residue polypeptide: UDP-N-acetylmuramoylalanine--D-glutamate ligase (449 aa).

117 to 123 (GSNGKTT) lines the ATP pocket.

It belongs to the MurCDEF family.

The protein localises to the cytoplasm. The enzyme catalyses UDP-N-acetyl-alpha-D-muramoyl-L-alanine + D-glutamate + ATP = UDP-N-acetyl-alpha-D-muramoyl-L-alanyl-D-glutamate + ADP + phosphate + H(+). Its pathway is cell wall biogenesis; peptidoglycan biosynthesis. Its function is as follows. Cell wall formation. Catalyzes the addition of glutamate to the nucleotide precursor UDP-N-acetylmuramoyl-L-alanine (UMA). The polypeptide is UDP-N-acetylmuramoylalanine--D-glutamate ligase (Exiguobacterium sibiricum (strain DSM 17290 / CCUG 55495 / CIP 109462 / JCM 13490 / 255-15)).